The primary structure comprises 531 residues: Protein RPN4 (531 aa).

A disordered region spans residues 338–432 (RFPSPSTSAN…PSAHTSSSDG (95 aa)). The span at 341–354 (SPSTSANVPSTATT) shows a compositional bias: polar residues. A compositionally biased stretch (low complexity) spans 362 to 375 (SSSNRSCVSNSNEN). The short motif at 382-398 (KKPTSAVVSSNASRRKL) is the Nuclear localization signal element. Residues 394–407 (SRRKLINYTKKHLS) are compositionally biased toward basic residues. Low complexity predominate over residues 408–430 (SHSSTNSNSKPSTASPSAHTSSS).

In terms of assembly, probably interacts with SEC63. Interacts with MUB1, UBR2 and RPN2. Post-translationally, ubiquitinated by UBR2 in the presence of UBC2; which leads to proteasomal degradation.

Its subcellular location is the nucleus. Acts as a transcriptional activator of a number of genes encoding proteasomal subunits. Binds to a PACE (proteasome-associated control element) DNA sequence 5'-GGTGGCAAA-3'. Its expression is in turn regulated by the 26S proteasome, thereby providing a negative feedback control mechanism. Required for normal growth at low temperatures. This is Protein RPN4 (RPN4) from Saccharomyces cerevisiae (strain ATCC 204508 / S288c) (Baker's yeast).